Here is a 907-residue protein sequence, read N- to C-terminus: MSGQTLTDRIAAAQYSVTGSAVARAVCKATTHEVMGPKKKHLDYLIQATNETNVNIPQMADTLFERATNSSWVVVFKALVTTHHLMVHGNERFIQYLASRNTLFNLSNFLDKSGSHGYDMSTFIRRYSRYLNEKAFSYRQMAFDFARVKKGADGVMRTMAPEKLLKSMPILQGQIDALLEFDVHPNELTNGVINAAFMLLFKDLIKLFACYNDGVINLLEKFFEMKKGQCKDALEIYKRFLTRMTRVSEFLKVAEQVGIDKGDIPDLTQAPSSLMETLEQHLNTLEGKKPGNNEGSGAPSPLSKSSPATTVTSPNSTPAKTIDTSPPVDLFATASAAVPVSTSKPSSDLLDLQPDFSSGGAAAAAAPAPPPPAGGATAWGDLLGEDSLAALSSVPSEAQISDPFAPEPTPPTTTAEIATASASASTTTTVTAVTAEVDLFGDAFAASPGEAPAASEGAAAPATPTPVAAALDACSGNDPFAPSEGSAEAAPELDLFAMKPPETSVPVVTPTASTAPPVPATAPSPAPAVAAAAAATTAATAAATTTTTTSAATATTAPPALDIFGDLFESTPEVAAAPKPDAAPSIDLFSTDAFSSPPQGASPVPESSLTADLLSVDAFAAPSPATTASPAKVDSSGVIDLFGDAFGSSASEPQPASQAASSSSASADLLAGFGGSFMAPSPSPVTPAQNNLLQPNFEAAFGTTPSTSSSSSFDPSVFDGLGDLLMPTMAPAGQPAPVSMVPPSPAMAASKALGSDLDSSLASLVGNLGISGTTTKKGDLQWNAGEKKLTGGANWQPKVAPATWSAGVPPSAPLQGAVPPTSSVPPVAGAPSVGQPGAGFGMPPAGTGMPMMPQQPVMFAQPMMRPPFGAAAVPGTQLSPSPTPASQSPKKPPAKDPLADLNIKDFL.

Residues 14-145 (QYSVTGSAVA…FSYRQMAFDF (132 aa)) form the ENTH domain. 4 disordered regions span residues 285–326 (LEGK…DTSP), 342–380 (TSKP…TAWG), 393–414 (SVPS…PTTT), and 505–525 (VPVV…APSP). 3 positions are modified to phosphoserine: Ser-296, Ser-300, and Ser-306. Residues 302–324 (LSKSSPATTVTSPNSTPAKTIDT) show a composition bias toward polar residues. Thr-310 is a glycosylation site (O-linked (GlcNAc) threonine). Residue Ser-313 is modified to Phosphoserine. Thr-317 is modified (phosphothreonine). Residues 505–515 (VPVVTPTASTA) are compositionally biased toward low complexity. Residues 516 to 525 (PPVPATAPSP) show a composition bias toward pro residues. A phosphoserine mark is found at Ser-596, Ser-602, Ser-623, Ser-629, and Ser-763. Arg-865 carries the asymmetric dimethylarginine; alternate modification. Position 865 is an omega-N-methylarginine; alternate (Arg-865). Positions 867–907 (PFGAAAVPGTQLSPSPTPASQSPKKPPAKDPLADLNIKDFL) are disordered. The span at 893–907 (PAKDPLADLNIKDFL) shows a compositional bias: basic and acidic residues.

It belongs to the PICALM/SNAP91 family. In terms of assembly, binds AP2A2. Interacts with AP2B1; clathrin competes with SNAP91. In terms of processing, thr-310 can be modified by the addition of N-acetylglucosamine which can be further phosphorylated. There is no evidence for direct Thr-310 phosphorylation.

It localises to the cell membrane. It is found in the membrane. The protein resides in the coated pit. In terms of biological role, adaptins are components of the adapter complexes which link clathrin to receptors in coated vesicles. Clathrin-associated protein complexes are believed to interact with the cytoplasmic tails of membrane proteins, leading to their selection and concentration. Binding of AP180 to clathrin triskelia induces their assembly into 60-70 nm coats. The sequence is that of Clathrin coat assembly protein AP180 (SNAP91) from Homo sapiens (Human).